The primary structure comprises 76 residues: uncharacterized protein (76 aa).

3 consecutive transmembrane segments (helical) span residues Met-1 to Leu-21, Cys-35 to Ile-55, and Asn-56 to Ile-76.

It localises to the cell membrane. This is an uncharacterized protein from Borreliella burgdorferi (strain ATCC 35210 / DSM 4680 / CIP 102532 / B31) (Borrelia burgdorferi).